A 1025-amino-acid chain; its full sequence is Multidrug resistance protein MdtC (1025 aa).

Helical transmembrane passes span 3–23, 333–353, 360–380, 387–407, 431–451, 469–489, 528–548, 853–873, 875–895, 897–917, 953–973, and 984–1004; these read FFAL…AITL, EVEQ…FLFL, IIPA…MYLC, LSLM…IVVL, VGFT…PLLL, VAIG…CGWM, LVGV…ISIP, VILI…LYES, VHPL…LLAL, LFNA…IGIV, PIMM…LSGG, and ITIV…TPVV.

It belongs to the resistance-nodulation-cell division (RND) (TC 2.A.6) family. MdtC subfamily. In terms of assembly, part of a tripartite efflux system composed of MdtA, MdtB and MdtC. MdtC forms a heteromultimer with MdtB.

The protein resides in the cell inner membrane. In terms of biological role, the MdtABC tripartite complex confers resistance against novobiocin and deoxycholate. The sequence is that of Multidrug resistance protein MdtC from Escherichia coli O9:H4 (strain HS).